The primary structure comprises 313 residues: Protein FixB (313 aa).

255-283 (LYLAVGISGQIQHMVGANASQTIFAINKD) is an FAD binding site.

It belongs to the ETF alpha-subunit/FixB family. As to quaternary structure, heterodimer of FixA and FixB.

It functions in the pathway amine and polyamine metabolism; carnitine metabolism. Its function is as follows. Required for anaerobic carnitine reduction. May bring reductant to CaiA. The protein is Protein FixB of Escherichia coli O81 (strain ED1a).